The primary structure comprises 920 residues: Glutamate receptor 2.2 (920 aa).

Positions 1–24 (MKNSKLFFRFLFLFFFFCLESSRG) are cleaved as a signal peptide. The Extracellular segment spans residues 25 to 580 (QDNGKTQVNI…DKFSFLKPLS (556 aa)). 7 N-linked (GlcNAc...) asparagine glycosylation sites follow: Asn-53, Asn-204, Asn-267, Asn-331, Asn-342, Asn-477, and Asn-542. A helical membrane pass occupies residues 581 to 601 (IELWLTTLVFFFLVGISVWTL). Residues 602-610 (EHRVNSDFR) lie on the Cytoplasmic side of the membrane. A helical membrane pass occupies residues 611–631 (GPANYQASTIFWFAFSTMVFA). Residues 632 to 635 (PRER) lie on the Cytoplasmic side of the membrane. Residues 636-656 (VLSFGARSLVVTWYFVLLVLT) traverse the membrane as a helical segment. The Extracellular segment spans residues 657–830 (QSYTASLASL…VTAIQLGVGS (174 aa)). Residue Asn-702 is glycosylated (N-linked (GlcNAc...) asparagine). A helical transmembrane segment spans residues 831-851 (FWFLFLVVFVVCVLALGKFTF). The Cytoplasmic segment spans residues 852-920 (CFLWKTKGKD…QVNQTDPDCL (69 aa)).

This sequence belongs to the glutamate-gated ion channel (TC 1.A.10.1) family. As to quaternary structure, may form heteromers. In terms of tissue distribution, expressed predominantly in roots.

The protein resides in the membrane. Glutamate-gated receptor that probably acts as a non-selective cation channel. May be involved in light-signal transduction and calcium homeostasis via the regulation of calcium influx into cells. The chain is Glutamate receptor 2.2 (GLR2.2) from Arabidopsis thaliana (Mouse-ear cress).